The chain runs to 293 residues: Magnetosome protein MamB (293 aa).

The Cytoplasmic portion of the chain corresponds to 1–12 (MTTAACRKCRDE). Residues 1-214 (MTTAACRKCR…GLMDTSVEND (214 aa)) form a transmembrane domain (TMD) region. The chain crosses the membrane as a helical span at residues 13–33 (VIWWAFFINIGQTTYKGVLGV). Residues 34–78 (LSGSAALVADAMHSGADVVATLVTMFSVKVSDKKADEKYPFGYGN) lie on the Lumenal side of the membrane. The helical transmembrane segment at 79–99 (IQFIASSIVGLILFFGALYLM) threads the bilayer. Over 100–105 (YESTMQ) the chain is Cytoplasmic. Residues 106 to 126 (IIAGNTSSPSPFAVLGAIVSI) form a helical membrane-spanning segment. At 127–158 (ATNELMFRYQSCVGRQNNSPAIIANAWDNRSD) the chain is on the lumenal side. The chain crosses the membrane as a helical span at residues 159–179 (ALSSVAVLIGIVAAVVGFPIA). Topologically, residues 180–293 (DRLAAIGVGI…VGVTPVRIAA (114 aa)) are cytoplasmic. A C-terminal domain (CTD) region spans residues 215–293 (VLVDAYNIAK…VGVTPVRIAA (79 aa)). Zn(2+) contacts are provided by H245, D247, and H283.

The protein belongs to the cation diffusion facilitator (CDF) transporter (TC 2.A.4) family. In terms of assembly, the isolated C-terminal domain (approximately 213-293) forms homodimers. Forms heterodimers with MamM.

The protein resides in the magnetosome membrane. In terms of biological role, plays a dual, essential role in magnetosome formation; required for magnetosome vesicle formation as well as biomineralization. Probably binds and transports iron. Requires heterodimerization with MamM for stability. The polypeptide is Magnetosome protein MamB (mamB) (Magnetospira sp. (strain QH-2) (Marine magnetic spirillum (strain QH-2))).